The primary structure comprises 160 residues: Putative UPF0479 protein YNL339W-B (160 aa).

Helical transmembrane passes span 39–59 and 136–156; these read IVFCLPFFPALFFVPVQKVLQ and VPMIWLDVFQVFFVFLVISQH.

Belongs to the UPF0479 family.

The protein resides in the membrane. In Saccharomyces cerevisiae (strain ATCC 204508 / S288c) (Baker's yeast), this protein is Putative UPF0479 protein YNL339W-B.